A 214-amino-acid polypeptide reads, in one-letter code: Pyridoxine/pyridoxamine 5'-phosphate oxidase (214 aa).

Residues 9-12 and Lys-67 each bind substrate; that span reads RKNY. Residues 62–67, 77–78, Lys-83, Lys-84, and Gln-106 contribute to the FMN site; these read RIVLLK and YT. 3 residues coordinate substrate: Tyr-124, Arg-128, and Ser-132. FMN contacts are provided by residues 141–142 and Trp-186; that span reads QS. 192-194 is a substrate binding site; the sequence is RLH. Arg-196 lines the FMN pocket.

It belongs to the pyridoxamine 5'-phosphate oxidase family. Homodimer. Requires FMN as cofactor.

The enzyme catalyses pyridoxamine 5'-phosphate + O2 + H2O = pyridoxal 5'-phosphate + H2O2 + NH4(+). It carries out the reaction pyridoxine 5'-phosphate + O2 = pyridoxal 5'-phosphate + H2O2. Its pathway is cofactor metabolism; pyridoxal 5'-phosphate salvage; pyridoxal 5'-phosphate from pyridoxamine 5'-phosphate: step 1/1. It participates in cofactor metabolism; pyridoxal 5'-phosphate salvage; pyridoxal 5'-phosphate from pyridoxine 5'-phosphate: step 1/1. In terms of biological role, catalyzes the oxidation of either pyridoxine 5'-phosphate (PNP) or pyridoxamine 5'-phosphate (PMP) into pyridoxal 5'-phosphate (PLP). This chain is Pyridoxine/pyridoxamine 5'-phosphate oxidase, found in Leptospira borgpetersenii serovar Hardjo-bovis (strain JB197).